The primary structure comprises 384 residues: 8-amino-7-oxononanoate synthase (384 aa).

Substrate is bound at residue arginine 21. A pyridoxal 5'-phosphate-binding site is contributed by 108–109; sequence GF. Residue histidine 133 participates in substrate binding. 3 residues coordinate pyridoxal 5'-phosphate: serine 179, histidine 207, and threonine 233. Lysine 236 is modified (N6-(pyridoxal phosphate)lysine). Substrate is bound at residue threonine 350.

Belongs to the class-II pyridoxal-phosphate-dependent aminotransferase family. BioF subfamily. Homodimer. Requires pyridoxal 5'-phosphate as cofactor.

The catalysed reaction is 6-carboxyhexanoyl-[ACP] + L-alanine + H(+) = (8S)-8-amino-7-oxononanoate + holo-[ACP] + CO2. Its pathway is cofactor biosynthesis; biotin biosynthesis. In terms of biological role, catalyzes the decarboxylative condensation of pimeloyl-[acyl-carrier protein] and L-alanine to produce 8-amino-7-oxononanoate (AON), [acyl-carrier protein], and carbon dioxide. In Erwinia tasmaniensis (strain DSM 17950 / CFBP 7177 / CIP 109463 / NCPPB 4357 / Et1/99), this protein is 8-amino-7-oxononanoate synthase.